A 453-amino-acid chain; its full sequence is Ribulose bisphosphate carboxylase large chain (453 aa).

Positions Met1–Ser2 are excised as a propeptide. N-acetylproline is present on Pro3. The residue at position 14 (Lys14) is an N6,N6,N6-trimethyllysine. Residues Asn123 and Thr173 each contribute to the substrate site. The active-site Proton acceptor is Lys175. Substrate is bound at residue Lys177. Mg(2+) is bound by residues Lys201, Asp203, and Glu204. N6-carboxylysine is present on Lys201. His294 acts as the Proton acceptor in catalysis. Positions 295, 327, and 379 each coordinate substrate.

Belongs to the RuBisCO large chain family. Type I subfamily. In terms of assembly, heterohexadecamer of 8 large chains and 8 small chains; disulfide-linked. The disulfide link is formed within the large subunit homodimers. It depends on Mg(2+) as a cofactor. Post-translationally, the disulfide bond which can form in the large chain dimeric partners within the hexadecamer appears to be associated with oxidative stress and protein turnover.

Its subcellular location is the plastid. It localises to the chloroplast. It carries out the reaction 2 (2R)-3-phosphoglycerate + 2 H(+) = D-ribulose 1,5-bisphosphate + CO2 + H2O. The catalysed reaction is D-ribulose 1,5-bisphosphate + O2 = 2-phosphoglycolate + (2R)-3-phosphoglycerate + 2 H(+). Its function is as follows. RuBisCO catalyzes two reactions: the carboxylation of D-ribulose 1,5-bisphosphate, the primary event in carbon dioxide fixation, as well as the oxidative fragmentation of the pentose substrate in the photorespiration process. Both reactions occur simultaneously and in competition at the same active site. The sequence is that of Ribulose bisphosphate carboxylase large chain from Phuopsis stylosa (Caucasian crosswort).